The primary structure comprises 249 residues: Probable transcriptional regulatory protein HY04AAS1_0501 (249 aa).

Belongs to the TACO1 family.

The protein localises to the cytoplasm. The polypeptide is Probable transcriptional regulatory protein HY04AAS1_0501 (Hydrogenobaculum sp. (strain Y04AAS1)).